The chain runs to 408 residues: MKGVFTVAEKVVLAYSGGLDTSIIIPWLKETYGYEVIAVAVDVGQGEELEPLEEKAIKSGASKIYILDKKKEFVEEYIWPTLKAGAVYEGKYLLGTSFARPLIAKCLVEVAAQEGATAVAHGATGKGNDQVRFELGVKALNPQLKVIAPWRIWNIRSREEAMDYAAARGIPVPVTKDRPYSMDRNLWHLSHEGGDLEDPWNAPGDDLYLIITPPEQAPDKPTYVTIDFEKGIPVAVDGEKLDAVALVEKLNDLAAANGVGIVDIVENRLVGMKSRGVYETPGGTILYTAHRELEYLTLDRMTMHFKEMVAAKYAELVYDGNWFSPLKKALDAFVDSTQETVTGTVRLKLYKGSCTPAGVKSPYSIYNEDLVTFGAGGDYDHKDATGFINLFGLPLKVRALMEQKTGLR.

14–22 (AYSGGLDTS) provides a ligand contact to ATP. L-citrulline is bound by residues Tyr-92 and Ser-97. Gly-122 contacts ATP. 3 residues coordinate L-aspartate: Thr-124, Asn-128, and Asp-129. Asn-128 is a binding site for L-citrulline. L-citrulline contacts are provided by Arg-132, Ser-181, Ser-190, Glu-266, and Tyr-278.

This sequence belongs to the argininosuccinate synthase family. Type 1 subfamily. In terms of assembly, homotetramer.

Its subcellular location is the cytoplasm. It catalyses the reaction L-citrulline + L-aspartate + ATP = 2-(N(omega)-L-arginino)succinate + AMP + diphosphate + H(+). The protein operates within amino-acid biosynthesis; L-arginine biosynthesis; L-arginine from L-ornithine and carbamoyl phosphate: step 2/3. This Moorella thermoacetica (strain ATCC 39073 / JCM 9320) protein is Argininosuccinate synthase.